Reading from the N-terminus, the 515-residue chain is 2-isopropylmalate synthase (515 aa).

A Pyruvate carboxyltransferase domain is found at 4–266; the sequence is IKIFDTTLRD…ETGLILKETK (263 aa). Mn(2+)-binding residues include Asp-13, His-201, His-203, and Asn-237. A regulatory domain region spans residues 392–515; sequence KLIQFGVSYD…ANLTRLVYES (124 aa).

It belongs to the alpha-IPM synthase/homocitrate synthase family. LeuA type 1 subfamily. Homodimer. Requires Mn(2+) as cofactor.

It is found in the cytoplasm. The catalysed reaction is 3-methyl-2-oxobutanoate + acetyl-CoA + H2O = (2S)-2-isopropylmalate + CoA + H(+). The protein operates within amino-acid biosynthesis; L-leucine biosynthesis; L-leucine from 3-methyl-2-oxobutanoate: step 1/4. In terms of biological role, catalyzes the condensation of the acetyl group of acetyl-CoA with 3-methyl-2-oxobutanoate (2-ketoisovalerate) to form 3-carboxy-3-hydroxy-4-methylpentanoate (2-isopropylmalate). The sequence is that of 2-isopropylmalate synthase from Oceanobacillus iheyensis (strain DSM 14371 / CIP 107618 / JCM 11309 / KCTC 3954 / HTE831).